Here is a 62-residue protein sequence, read N- to C-terminus: UPF0337 protein gsr0040 (62 aa).

2 stretches are compositionally biased toward basic and acidic residues: residues 1–15 (MGIDKRAEATAKDVQ) and 27–62 (DDPKLELEGKAKQVEASAEHKKEDLKDQAHRTIDNV). Residues 1-62 (MGIDKRAEAT…DQAHRTIDNV (62 aa)) are disordered.

This sequence belongs to the UPF0337 (CsbD) family.

This chain is UPF0337 protein gsr0040, found in Gloeobacter violaceus (strain ATCC 29082 / PCC 7421).